We begin with the raw amino-acid sequence, 1621 residues long: Lysophospholipase NTE1 (1621 aa).

Residues 1-12 (MSSIPTPPDANG) lie on the Cytoplasmic side of the membrane. The chain crosses the membrane as a helical span at residues 13 to 33 (NPLIALAVAVIYAILYVLQGV). The Lumenal segment spans residues 34 to 59 (KYGVSLLTIGIPSCIVRMLQYSLTIS). The helical transmembrane segment at 60–80 (LGFPHLLALFAGALLALFFLI) threads the bilayer. At 81–1621 (RYRYLTRYAQ…RGNRLRRMSI (1541 aa)) the chain is on the cytoplasmic side. Disordered regions lie at residues 188-209 (PDASSQGTPTPSSDTNSPTRPS), 250-379 (EGEE…SVPR), 545-566 (QTATTTVKNEPLNGGSSPLDET), 648-667 (WNLNDSPHTDGQPVDPQRDD), 711-735 (VSALSTPNSPMFPPNAGTPLQGSTR), 772-791 (DDEASSISMSLHDSQGGASG), and 839-870 (FRSTSSNQENPNSTPGSKHRQSSFGSSNERPF). Low complexity-rich tracts occupy residues 195 to 209 (TPTPSSDTNSPTRPS) and 348 to 361 (RRSQSLRSSPRLNS). A nucleoside 3',5'-cyclic phosphate-binding positions include 788 to 907 (GASG…GYLS) and 951 to 1070 (RLLS…IAGR). Over residues 839–867 (FRSTSSNQENPNSTPGSKHRQSSFGSSNE) the composition is skewed to polar residues. The PNPLA domain occupies 1316-1480 (LVLGGGGARG…MDNTPIQPLR (165 aa)). Positions 1320–1325 (GGGARG) match the GXGXXG motif. The short motif at 1347–1351 (GCSIG) is the GXSXG element. Ser-1349 functions as the Nucleophile in the catalytic mechanism. Catalysis depends on Asp-1467, which acts as the Proton acceptor. The DGA/G motif lies at 1467–1469 (DGG).

Belongs to the NTE family.

The protein resides in the endoplasmic reticulum membrane. The catalysed reaction is a 1-acyl-sn-glycero-3-phosphocholine + H2O = sn-glycerol 3-phosphocholine + a fatty acid + H(+). With respect to regulation, inhibited by organophosphorus esters. Its function is as follows. Intracellular phospholipase B that catalyzes the double deacylation of phosphatidylcholine (PC) to glycerophosphocholine (GroPCho). Plays an important role in membrane lipid homeostasis. Responsible for the rapid PC turnover in response to inositol, elevated temperatures, or when choline is present in the growth medium. This chain is Lysophospholipase NTE1 (NTE1), found in Cryptococcus neoformans var. neoformans serotype D (strain B-3501A) (Filobasidiella neoformans).